Here is a 154-residue protein sequence, read N- to C-terminus: Myoglobin (154 aa).

The Globin domain maps to 2–148; the sequence is VLSDGEWQLV…FRKDIAAKYK (147 aa). Phosphoserine is present on Ser4. Position 65 (His65) interacts with nitrite. His65 serves as a coordination point for O2. Thr68 carries the phosphothreonine modification. Heme b is bound at residue His94.

It belongs to the globin family. As to quaternary structure, monomeric.

The protein localises to the cytoplasm. Its subcellular location is the sarcoplasm. It carries out the reaction Fe(III)-heme b-[protein] + nitric oxide + H2O = Fe(II)-heme b-[protein] + nitrite + 2 H(+). The enzyme catalyses H2O2 + AH2 = A + 2 H2O. Functionally, monomeric heme protein which primary function is to store oxygen and facilitate its diffusion within muscle tissues. Reversibly binds oxygen through a pentacoordinated heme iron and enables its timely and efficient release as needed during periods of heightened demand. Depending on the oxidative conditions of tissues and cells, and in addition to its ability to bind oxygen, it also has a nitrite reductase activity whereby it regulates the production of bioactive nitric oxide. Under stress conditions, like hypoxia and anoxia, it also protects cells against reactive oxygen species thanks to its pseudoperoxidase activity. The sequence is that of Myoglobin from Balaena mysticetus (Bowhead whale).